Reading from the N-terminus, the 695-residue chain is Centrosomal protein of 89 kDa (695 aa).

Disordered stretches follow at residues 24–54 (LIPAATIAPRPAVPRTPPPRSPNPSPERPRS), 66–147 (TGRT…GDED), and 167–272 (AVPL…SEVL). A compositionally biased stretch (pro residues) spans 34–49 (PAVPRTPPPRSPNPSP). Acidic residues-rich tracts occupy residues 124-146 (DEDDDEDDEGNDIDELEGLEGDE) and 178-189 (DSDVDEETEDSA). Positions 209–226 (GQTQPSSLPQPRSVSRRS) are enriched in polar residues. Basic and acidic residues predominate over residues 251-271 (TNKESPVRVNERDRSSEDSEV). Coiled coils occupy residues 276-368 (LEVQ…RYQA) and 406-632 (AYED…LEKE).

It is found in the cytoplasm. The protein resides in the cytosol. It localises to the cytoskeleton. Its subcellular location is the microtubule organizing center. The protein localises to the centrosome. It is found in the spindle pole. The protein resides in the centriole. It localises to the mitochondrion intermembrane space. Required for ciliogenesis. Also plays a role in mitochondrial metabolism where it may modulate complex IV activity. This Danio rerio (Zebrafish) protein is Centrosomal protein of 89 kDa (cep89).